The chain runs to 724 residues: Probable protein phosphatase 2C 62 (724 aa).

The segment at 357–385 is disordered; sequence DELISTSEATRHSVDEIAQKPIIDTSEKN. A compositionally biased stretch (basic and acidic residues) spans 365–374; it reads ATRHSVDEIA. Residues 482–719 form the PPM-type phosphatase domain; the sequence is DSGFASLQSP…DAVTVIISFV (238 aa). Positions 514, 515, 643, and 710 each coordinate Mn(2+).

The protein belongs to the PP2C family. Mg(2+) serves as cofactor. It depends on Mn(2+) as a cofactor.

It catalyses the reaction O-phospho-L-seryl-[protein] + H2O = L-seryl-[protein] + phosphate. It carries out the reaction O-phospho-L-threonyl-[protein] + H2O = L-threonyl-[protein] + phosphate. This is Probable protein phosphatase 2C 62 from Arabidopsis thaliana (Mouse-ear cress).